We begin with the raw amino-acid sequence, 159 residues long: MSTTVTLTSSDGVDLTVDRDVAERSVLIKNMLEDLGESGEAIPIPNVNEVVLKKVIEWCTHHKNDPPSTGDDDDSRRKTTDIDEWDQKFMQVDQEMLFEIILAANYLDIKALLDVGCKTVANMIKGKSPEEIRKTFNIQNDFTPEEEDQIRRENEWAEE.

The interaction with the F-box domain of F-box proteins stretch occupies residues 101-159 (ILAANYLDIKALLDVGCKTVANMIKGKSPEEIRKTFNIQNDFTPEEEDQIRRENEWAEE).

The protein belongs to the SKP1 family. As to quaternary structure, component of the SCF (SKP1-CUL1-F-box protein) E3 ubiquitin ligase complexes.

It participates in protein modification; protein ubiquitination. Essential component of the SCF (SKP1-CUL1-F-box protein) E3 ubiquitin ligase complexes, which mediate the ubiquitination and subsequent proteasomal degradation of target proteins. Controls sulfur metabolite repression, probably by mediating the inactivation or degradation of the metR transcription factor. The protein is E3 ubiquitin ligase complex SCF subunit sconC (sconC) of Aspergillus clavatus (strain ATCC 1007 / CBS 513.65 / DSM 816 / NCTC 3887 / NRRL 1 / QM 1276 / 107).